Reading from the N-terminus, the 131-residue chain is Aspartate 1-decarboxylase (131 aa).

Ser25 serves as the catalytic Schiff-base intermediate with substrate; via pyruvic acid. Ser25 carries the pyruvic acid (Ser) modification. Thr57 lines the substrate pocket. Catalysis depends on Tyr58, which acts as the Proton donor. 73–75 (GSA) serves as a coordination point for substrate.

It belongs to the PanD family. In terms of assembly, heterooctamer of four alpha and four beta subunits. Pyruvate is required as a cofactor. Post-translationally, is synthesized initially as an inactive proenzyme, which is activated by self-cleavage at a specific serine bond to produce a beta-subunit with a hydroxyl group at its C-terminus and an alpha-subunit with a pyruvoyl group at its N-terminus.

Its subcellular location is the cytoplasm. The catalysed reaction is L-aspartate + H(+) = beta-alanine + CO2. Its pathway is cofactor biosynthesis; (R)-pantothenate biosynthesis; beta-alanine from L-aspartate: step 1/1. In terms of biological role, catalyzes the pyruvoyl-dependent decarboxylation of aspartate to produce beta-alanine. The chain is Aspartate 1-decarboxylase from Leptothrix cholodnii (strain ATCC 51168 / LMG 8142 / SP-6) (Leptothrix discophora (strain SP-6)).